The sequence spans 230 residues: Sugar fermentation stimulation protein homolog (230 aa).

It belongs to the SfsA family.

The sequence is that of Sugar fermentation stimulation protein homolog from Clostridium perfringens (strain SM101 / Type A).